Here is a 169-residue protein sequence, read N- to C-terminus: Cell division inhibitor SulA (169 aa).

The tract at residues alanine 106–tyrosine 112 is ftsZ binding. A lon protease binding region spans residues lysine 162–histidine 169.

The protein belongs to the SulA family. Interacts with FtsZ. Post-translationally, is rapidly cleaved and degraded by the Lon protease once DNA damage is repaired.

Component of the SOS system and an inhibitor of cell division. Accumulation of SulA causes rapid cessation of cell division and the appearance of long, non-septate filaments. In the presence of GTP, binds a polymerization-competent form of FtsZ in a 1:1 ratio, thus inhibiting FtsZ polymerization and therefore preventing it from participating in the assembly of the Z ring. This mechanism prevents the premature segregation of damaged DNA to daughter cells during cell division. The sequence is that of Cell division inhibitor SulA from Salmonella dublin (strain CT_02021853).